Consider the following 268-residue polypeptide: Ribosomal RNA small subunit methyltransferase A (268 aa).

S-adenosyl-L-methionine is bound by residues asparagine 12, leucine 14, glycine 38, glutamate 59, aspartate 82, and asparagine 107.

The protein belongs to the class I-like SAM-binding methyltransferase superfamily. rRNA adenine N(6)-methyltransferase family. RsmA subfamily.

It localises to the cytoplasm. The catalysed reaction is adenosine(1518)/adenosine(1519) in 16S rRNA + 4 S-adenosyl-L-methionine = N(6)-dimethyladenosine(1518)/N(6)-dimethyladenosine(1519) in 16S rRNA + 4 S-adenosyl-L-homocysteine + 4 H(+). Functionally, specifically dimethylates two adjacent adenosines (A1518 and A1519) in the loop of a conserved hairpin near the 3'-end of 16S rRNA in the 30S particle. May play a critical role in biogenesis of 30S subunits. The chain is Ribosomal RNA small subunit methyltransferase A from Aster yellows witches'-broom phytoplasma (strain AYWB).